The chain runs to 462 residues: Jasmonoyl--L-amino acid synthetase GH3.3 (462 aa).

Residue Ser-103 coordinates ATP. Residue Ser-106 participates in jasmonate binding. Residues Thr-126, Asn-172, and 337-342 contribute to the ATP site; that span reads GASEGW. 170–174 is an an L-alpha-amino acid binding site; sequence TTNVY. Jasmonate contacts are provided by residues 334 to 337 and Ser-339; that span reads AEYG.

Belongs to the IAA-amido conjugating enzyme family. As to expression, expressed in green shoots and flowers.

It catalyses the reaction a jasmonate + an L-alpha-amino acid + ATP = a jasmonyl-L-amino acid + AMP + diphosphate + H(+). In terms of biological role, catalyzes the synthesis of jasmonate-amino acid conjugates by adenylation. Catalyzes the conjugation of jasmonate (JA) to Ile when expressed in a heterologous system (E.coli). Catalyzes in vitro the conjugation of jasmonate (JA) to Ile, Phe, Leu, Met, Val and Trp. May catalyze the synthesis of indole-3-acetic acid (IAA)-amino acid conjugates, providing a mechanism for the plant to cope with the presence of excess auxin. This is Jasmonoyl--L-amino acid synthetase GH3.3 from Oryza sativa subsp. japonica (Rice).